Consider the following 413-residue polypeptide: Cell surface GPI-anchored protein ECM33 (413 aa).

An N-terminal signal peptide occupies residues 1–20 (MQIKSFLLPIVAALLTSVSA). N-linked (GlcNAc...) asparagine glycosylation is found at Asn-93, Asn-102, Asn-172, Asn-209, Asn-222, Asn-227, Asn-279, Asn-290, Asn-306, Asn-322, and Asn-382. Residues 347–390 (YVCTHPANPSSSSKSGSSTQTGKSDSKSSDGSSSSNSSSSSKKG) form a disordered region. Positions 356–390 (SSSSKSGSSTQTGKSDSKSSDGSSSSNSSSSSKKG) are enriched in low complexity. Gly-390 is lipidated: GPI-anchor amidated glycine. Residues 391–413 (ASNVLVVPGMVLTTALGVLLALI) constitute a propeptide, removed in mature form.

Belongs to the SPS2 family.

It is found in the cell membrane. The protein localises to the secreted. The protein resides in the cell wall. Cell surface protein required for proper cell wall integrity and for the correct assembly of the mannoprotein outer layer of the cell wall. This Candida albicans (strain SC5314 / ATCC MYA-2876) (Yeast) protein is Cell surface GPI-anchored protein ECM33 (ECM331).